Reading from the N-terminus, the 512-residue chain is NAD(P) transhydrogenase subunit alpha (512 aa).

Topologically, residues 1 to 400 (MLIGVPRELL…KESKPTDPRV (400 aa)) are cytoplasmic. NAD(+) contacts are provided by residues 125–128 (QALD), V175, 195–197 (DSR), and G225. A disordered region spans residues 375-394 (SAQPKQETKAAPVAEKKESK). Helical transmembrane passes span 401 to 421 (KYGV…VAPA) and 422 to 442 (AFLS…YVVW). Residues 443-451 (NVSHALHTP) are Cytoplasmic-facing. The chain crosses the membrane as a helical span at residues 452-472 (LMAVTNAISGIIIVGALLQIR). Topologically, residues 473 to 478 (QPTGNL) are periplasmic. A helical membrane pass occupies residues 479-499 (FIDALAFVAILVASINIFGGF). At 500–512 (RVTQRMLAMFRKG) the chain is on the cytoplasmic side.

This sequence belongs to the AlaDH/PNT family. In terms of assembly, heterodimer of an alpha (PntA) and a beta (PntB) chain.

It localises to the cell inner membrane. The catalysed reaction is NAD(+) + NADPH + H(+)(in) = NADH + NADP(+) + H(+)(out). In terms of biological role, the transhydrogenation between NADH and NADP is coupled to respiration and ATP hydrolysis and functions as a proton pump across the membrane. This Haemophilus influenzae (strain ATCC 51907 / DSM 11121 / KW20 / Rd) protein is NAD(P) transhydrogenase subunit alpha (pntA).